The following is a 564-amino-acid chain: Apyrase (564 aa).

The first 25 residues, 1-25, serve as a signal peptide directing secretion; it reads MAGKPGIQLFVIFLLLSSFAAVVWA. A divalent metal cation is bound by residues Asp-48, His-50, Asp-99, Asn-131, His-234, and His-258. Position 371 (Arg-371) interacts with AMP. Asn-391 carries N-linked (GlcNAc...) asparagine glycosylation. Arg-406, Phe-425, and Asp-515 together coordinate AMP.

It belongs to the 5'-nucleotidase family. Requires a divalent metal cation as cofactor. As to expression, female salivary gland (at protein level). Low-level expression in male tissues. Not detected in female carcasses without salivary glands.

Its subcellular location is the secreted. The enzyme catalyses a ribonucleoside 5'-triphosphate + 2 H2O = a ribonucleoside 5'-phosphate + 2 phosphate + 2 H(+). Facilitates hematophagy by inhibiting ADP-dependent platelet aggregation in the host. Cleaves adenosine triphosphate (ATP) and adenosine diphosphate (ADP) to adenosine monophosphate (AMP) and inorganic phosphate. May reduce probing time by facilitating the speed of locating blood. This is Apyrase from Aedes albopictus (Asian tiger mosquito).